The following is a 332-amino-acid chain: Probable allantoicase (332 aa).

The protein belongs to the allantoicase family.

The catalysed reaction is allantoate + H2O = (S)-ureidoglycolate + urea. Its pathway is nitrogen metabolism; (S)-allantoin degradation; (S)-ureidoglycolate from allantoate (aminidohydrolase route): step 1/1. The chain is Probable allantoicase from Pseudomonas aeruginosa (strain LESB58).